We begin with the raw amino-acid sequence, 440 residues long: Thymidine phosphorylase (440 aa).

Belongs to the thymidine/pyrimidine-nucleoside phosphorylase family. In terms of assembly, homodimer.

It catalyses the reaction thymidine + phosphate = 2-deoxy-alpha-D-ribose 1-phosphate + thymine. It functions in the pathway pyrimidine metabolism; dTMP biosynthesis via salvage pathway; dTMP from thymine: step 1/2. In terms of biological role, the enzymes which catalyze the reversible phosphorolysis of pyrimidine nucleosides are involved in the degradation of these compounds and in their utilization as carbon and energy sources, or in the rescue of pyrimidine bases for nucleotide synthesis. The chain is Thymidine phosphorylase from Klebsiella pneumoniae (strain 342).